The primary structure comprises 602 residues: MVNNMTDLTAHDAAPAWQTRDHLDDPVIGELRNRFGPDAFTVQPTRTGVPVVWVKREQLLEVGDFLKKLPKPYVMLFDLHGMDERLRTHRDGLPAADFSVFYHLISIDRNRDIMLKVALSENDLHLPTFTKLFPNANWYERETWEMFGMTFDGHPNLRRIMMPPTWEGHPLRKDYPARATEFDPFELTKAKQDLEMEALTFKPEEWGMKRSTDNEDFMFLNLGPNHPSAHGAFRIILQLDGEEIVDCVPDIGYHHRGAEKMGERQSWHSYIPYTDRIEYLGGCVNEMPYVLAVEKLAGITVPDRVNVIRVMLSELFRINSHLLYISTFIQDVGAMTPVFFAFTDRQKIYDLVEAITGFRMHPAWFRIGGVAHDLPRGWDRLLREFLEWMPKRLDSYEKAALRNTILKGRSVGVAAYTAKEALEWGTTGAGLRATGIGFDVRKWRPYSGYENFDFEVPTGGGVSDCYTRVMLKVEELRQSLRILQQCLDNMPEGPFKADHPLTTPPPKERTLQHIETLITHFLQVSWGPVMPANESFQMIEATKGINSYYLTSDGSTMSYRTRVRTPSFAHLQQIPSAIRGSLVSDLIVYLGSIDFVMSDVDR.

The segment at 1–192 is NADH dehydrogenase I subunit C; it reads MVNNMTDLTA…DPFELTKAKQ (192 aa). The NADH dehydrogenase I subunit D stretch occupies residues 216–602; it reads DFMFLNLGPN…IDFVMSDVDR (387 aa).

This sequence in the N-terminal section; belongs to the complex I 30 kDa subunit family. It in the C-terminal section; belongs to the complex I 49 kDa subunit family. NDH-1 is composed of 13 different subunits. Subunits NuoB, CD, E, F, and G constitute the peripheral sector of the complex.

The protein resides in the cell inner membrane. It carries out the reaction a quinone + NADH + 5 H(+)(in) = a quinol + NAD(+) + 4 H(+)(out). Functionally, NDH-1 shuttles electrons from NADH, via FMN and iron-sulfur (Fe-S) centers, to quinones in the respiratory chain. The immediate electron acceptor for the enzyme in this species is believed to be ubiquinone. Couples the redox reaction to proton translocation (for every two electrons transferred, four hydrogen ions are translocated across the cytoplasmic membrane), and thus conserves the redox energy in a proton gradient. The polypeptide is NADH-quinone oxidoreductase subunit C/D (Klebsiella pneumoniae (strain 342)).